Consider the following 245-residue polypeptide: tRNA pseudouridine synthase A (245 aa).

The active-site Nucleophile is the D52. Y112 contacts substrate.

The protein belongs to the tRNA pseudouridine synthase TruA family. As to quaternary structure, homodimer.

It carries out the reaction uridine(38/39/40) in tRNA = pseudouridine(38/39/40) in tRNA. Formation of pseudouridine at positions 38, 39 and 40 in the anticodon stem and loop of transfer RNAs. The chain is tRNA pseudouridine synthase A from Dictyoglomus thermophilum (strain ATCC 35947 / DSM 3960 / H-6-12).